The sequence spans 140 residues: Large ribosomal subunit protein uL14 (140 aa).

The protein belongs to the universal ribosomal protein uL14 family.

This Brugia malayi (Filarial nematode worm) protein is Large ribosomal subunit protein uL14 (RPL23).